A 191-amino-acid chain; its full sequence is Large ribosomal subunit protein uL5 (191 aa).

This sequence belongs to the universal ribosomal protein uL5 family. As to quaternary structure, part of the 50S ribosomal subunit; part of the 5S rRNA/L5/L18/L25 subcomplex. Contacts the 5S rRNA and the P site tRNA. Forms a bridge to the 30S subunit in the 70S ribosome.

Its function is as follows. This is one of the proteins that bind and probably mediate the attachment of the 5S RNA into the large ribosomal subunit, where it forms part of the central protuberance. In the 70S ribosome it contacts protein S13 of the 30S subunit (bridge B1b), connecting the 2 subunits; this bridge is implicated in subunit movement. Contacts the P site tRNA; the 5S rRNA and some of its associated proteins might help stabilize positioning of ribosome-bound tRNAs. The chain is Large ribosomal subunit protein uL5 from Micrococcus luteus (strain ATCC 4698 / DSM 20030 / JCM 1464 / CCM 169 / CCUG 5858 / IAM 1056 / NBRC 3333 / NCIMB 9278 / NCTC 2665 / VKM Ac-2230) (Micrococcus lysodeikticus).